Here is a 234-residue protein sequence, read N- to C-terminus: Glucosamine-6-phosphate deaminase (234 aa).

The Proton acceptor; for enolization step role is filled by D62. N128 acts as the For ring-opening step in catalysis. H130 (proton acceptor; for ring-opening step) is an active-site residue. The active-site For ring-opening step is the E135.

It belongs to the glucosamine/galactosamine-6-phosphate isomerase family. NagB subfamily.

The enzyme catalyses alpha-D-glucosamine 6-phosphate + H2O = beta-D-fructose 6-phosphate + NH4(+). Its pathway is amino-sugar metabolism; N-acetylneuraminate degradation; D-fructose 6-phosphate from N-acetylneuraminate: step 5/5. In terms of biological role, catalyzes the reversible isomerization-deamination of glucosamine 6-phosphate (GlcN6P) to form fructose 6-phosphate (Fru6P) and ammonium ion. The protein is Glucosamine-6-phosphate deaminase of Streptococcus pyogenes serotype M1.